Reading from the N-terminus, the 150-residue chain is Small ribosomal subunit protein eS19S (150 aa).

It belongs to the eukaryotic ribosomal protein eS19 family.

In Ascaris suum (Pig roundworm), this protein is Small ribosomal subunit protein eS19S (RPS19S).